Consider the following 241-residue polypeptide: Capsid protein (241 aa).

Positions 1–26 (MSPASSWKRKRPSSSSAQASKKRRVY) match the Bipartite nuclear localization signal motif. The segment at 1–30 (MSPASSWKRKRPSSSSAQASKKRRVYRPAV) is disordered.

Belongs to the geminiviridae capsid protein family. Homomultimer. Interacts with the movement protein. Binds to single-stranded and double-stranded viral DNA.

The protein localises to the virion. It localises to the host nucleus. Functionally, encapsidates the viral genome into characteristic twinned ('geminate') particles. Binds the genomic viral ssDNA and shuttles it into and out of the cell nucleus. Plays a role in protection of the genome from degradation, virus acquisition and transmission by insect vectors, infectivity, and systemic movement. The CP of monopartite geminiviruses is absolutely essential for virus movement. This is Capsid protein from Avena sativa (Oat).